A 91-amino-acid polypeptide reads, in one-letter code: Large ribosomal subunit protein uL23c (91 aa).

It belongs to the universal ribosomal protein uL23 family. Part of the 50S ribosomal subunit.

It localises to the plastid. The protein resides in the chloroplast. In terms of biological role, binds to 23S rRNA. In Pinus thunbergii (Japanese black pine), this protein is Large ribosomal subunit protein uL23c (rpl23).